Consider the following 393-residue polypeptide: Large ribosomal subunit protein uL2m (393 aa).

A mitochondrion-targeting transit peptide spans 1–43 (MLVLGSLRSALSCSSTASLISKRNPCYPYGILCRTLSQSVKLW). Positions 337-393 (AMNKCDHPHGGGRGKSKSNKLSMSPWGQLAKGYKTRRGKNQNRMKVKDRPRGKDARL) are disordered. A compositionally biased stretch (basic residues) spans 369–380 (YKTRRGKNQNRM). The span at 381 to 393 (KVKDRPRGKDARL) shows a compositional bias: basic and acidic residues.

Belongs to the universal ribosomal protein uL2 family. In terms of assembly, component of the mitochondrial large ribosomal subunit (mt-LSU). Mature yeast 74S mitochondrial ribosomes consist of a small (37S) and a large (54S) subunit. The 37S small subunit contains a 15S ribosomal RNA (15S mt-rRNA) and 34 different proteins. The 54S large subunit contains a 21S rRNA (21S mt-rRNA) and 46 different proteins. uL2m has a Na/K ligand binding site.

The protein localises to the mitochondrion. Component of the mitochondrial ribosome (mitoribosome), a dedicated translation machinery responsible for the synthesis of mitochondrial genome-encoded proteins, including at least some of the essential transmembrane subunits of the mitochondrial respiratory chain. The mitoribosomes are attached to the mitochondrial inner membrane and translation products are cotranslationally integrated into the membrane. The chain is Large ribosomal subunit protein uL2m (RML2) from Saccharomyces cerevisiae (strain ATCC 204508 / S288c) (Baker's yeast).